The primary structure comprises 1008 residues: PAN2-PAN3 deadenylation complex catalytic subunit PAN2 (1008 aa).

WD repeat units follow at residues Gly29–Arg68, Pro110–Val149, His158–Val198, Val200–Pro236, and Ala277–Glu316. Positions Phe314–Lys449 are linker. The region spanning Lys450–Gly755 is the USP domain. The region spanning Ala808 to Tyr976 is the Exonuclease domain. A divalent metal cation is bound by residues Asp810, Glu812, Asp915, and Asp968.

This sequence belongs to the peptidase C19 family. PAN2 subfamily. In terms of assembly, forms a heterotrimer with an asymmetric homodimer of the regulatory subunit PAN3 to form the poly(A)-nuclease (PAN) deadenylation complex. A divalent metal cation is required as a cofactor.

It is found in the cytoplasm. It catalyses the reaction Exonucleolytic cleavage of poly(A) to 5'-AMP.. With respect to regulation, positively regulated by the regulatory subunit PAN3. Catalytic subunit of the poly(A)-nuclease (PAN) deadenylation complex, one of two cytoplasmic mRNA deadenylases involved in mRNA turnover. PAN specifically shortens poly(A) tails of RNA and the activity is stimulated by poly(A)-binding protein PAB1. PAN deadenylation is followed by rapid degradation of the shortened mRNA tails by the CCR4-NOT complex. Deadenylated mRNAs are then degraded by two alternative mechanisms, namely exosome-mediated 3'-5' exonucleolytic degradation, or deadenylation-dependent mRNA decaping and subsequent 5'-3' exonucleolytic degradation by XRN1. May also be involved in post-transcriptional maturation of mRNA poly(A) tails. In Yarrowia lipolytica (strain CLIB 122 / E 150) (Yeast), this protein is PAN2-PAN3 deadenylation complex catalytic subunit PAN2.